Reading from the N-terminus, the 85-residue chain is Large ribosomal subunit protein bL27 (85 aa).

The tract at residues 1-21 (MAHKKGLGSTKNGRDSQAKRL) is disordered.

It belongs to the bacterial ribosomal protein bL27 family.

The sequence is that of Large ribosomal subunit protein bL27 from Thermus thermophilus (strain ATCC BAA-163 / DSM 7039 / HB27).